A 475-amino-acid polypeptide reads, in one-letter code: GTPase Der (475 aa).

2 EngA-type G domains span residues 3-167 (LTIA…GGER) and 205-380 (LRIA…RVWN). Residues 9 to 16 (GRPNVGKS), 56 to 60 (DTAGL), 119 to 122 (NKSE), 211 to 218 (GRPNTGKS), 258 to 262 (DTAGL), and 323 to 326 (NKWD) contribute to the GTP site. In terms of domain architecture, KH-like spans 381–465 (RRISTGKLNR…PIRISLRASD (85 aa)).

It belongs to the TRAFAC class TrmE-Era-EngA-EngB-Septin-like GTPase superfamily. EngA (Der) GTPase family. In terms of assembly, associates with the 50S ribosomal subunit.

Functionally, GTPase that plays an essential role in the late steps of ribosome biogenesis. The protein is GTPase Der of Bartonella henselae (strain ATCC 49882 / DSM 28221 / CCUG 30454 / Houston 1) (Rochalimaea henselae).